Consider the following 428-residue polypeptide: Gamma-glutamyl phosphate reductase (428 aa).

The protein belongs to the gamma-glutamyl phosphate reductase family.

Its subcellular location is the cytoplasm. The catalysed reaction is L-glutamate 5-semialdehyde + phosphate + NADP(+) = L-glutamyl 5-phosphate + NADPH + H(+). The protein operates within amino-acid biosynthesis; L-proline biosynthesis; L-glutamate 5-semialdehyde from L-glutamate: step 2/2. Its function is as follows. Catalyzes the NADPH-dependent reduction of L-glutamate 5-phosphate into L-glutamate 5-semialdehyde and phosphate. The product spontaneously undergoes cyclization to form 1-pyrroline-5-carboxylate. The chain is Gamma-glutamyl phosphate reductase from Anaeromyxobacter sp. (strain Fw109-5).